We begin with the raw amino-acid sequence, 458 residues long: UDP-N-acetylmuramate--L-alanine ligase (458 aa).

Residue 118–124 (GTHGKTT) coordinates ATP.

Belongs to the MurCDEF family.

The protein resides in the cytoplasm. It carries out the reaction UDP-N-acetyl-alpha-D-muramate + L-alanine + ATP = UDP-N-acetyl-alpha-D-muramoyl-L-alanine + ADP + phosphate + H(+). Its pathway is cell wall biogenesis; peptidoglycan biosynthesis. Functionally, cell wall formation. The chain is UDP-N-acetylmuramate--L-alanine ligase from Clostridium botulinum (strain Loch Maree / Type A3).